We begin with the raw amino-acid sequence, 305 residues long: Acetaldehyde dehydrogenase (305 aa).

NAD(+) is bound at residue 13–16 (SGNI). The Acyl-thioester intermediate role is filled by Cys128. Residues 159 to 167 (SAGPGTRQN) and Asn278 contribute to the NAD(+) site.

Belongs to the acetaldehyde dehydrogenase family.

It catalyses the reaction acetaldehyde + NAD(+) + CoA = acetyl-CoA + NADH + H(+). This is Acetaldehyde dehydrogenase from Roseiflexus sp. (strain RS-1).